Here is a 433-residue protein sequence, read N- to C-terminus: Histidinol dehydrogenase (433 aa).

3 residues coordinate NAD(+): tyrosine 129, glutamine 191, and asparagine 214. Residues serine 237, glutamine 259, and histidine 262 each coordinate substrate. Glutamine 259 and histidine 262 together coordinate Zn(2+). Catalysis depends on proton acceptor residues glutamate 326 and histidine 327. Substrate contacts are provided by histidine 327, aspartate 360, glutamate 414, and histidine 419. Aspartate 360 is a binding site for Zn(2+). Histidine 419 provides a ligand contact to Zn(2+).

The protein belongs to the histidinol dehydrogenase family. The cofactor is Zn(2+).

The catalysed reaction is L-histidinol + 2 NAD(+) + H2O = L-histidine + 2 NADH + 3 H(+). The protein operates within amino-acid biosynthesis; L-histidine biosynthesis; L-histidine from 5-phospho-alpha-D-ribose 1-diphosphate: step 9/9. Functionally, catalyzes the sequential NAD-dependent oxidations of L-histidinol to L-histidinaldehyde and then to L-histidine. The polypeptide is Histidinol dehydrogenase (Methanosarcina barkeri (strain Fusaro / DSM 804)).